Reading from the N-terminus, the 215-residue chain is uncharacterized protein (215 aa).

6 helical membrane-spanning segments follow: residues 21–40, 50–69, 95–117, 122–144, 156–178, and 183–205; these read IIKYLVIFFLFCIISTVLIN, LIFSVICLLISLIGFSSVIF, FFAIFISSTIGLVFVLPIIYVLF, LEIIFFFSSVWMILVLSSSLVVL, ANFVGTFIMPLLIPNIIMTGLIL, and LQLIFIMIGINLVFLPISFFLSS.

The protein belongs to the CcmB/CycW/HelB family.

Its subcellular location is the cell membrane. This is an uncharacterized protein from Rickettsia conorii (strain ATCC VR-613 / Malish 7).